The sequence spans 490 residues: MDGIQTSDSSHHGIVENSPYRTPYDRYAEGGQLGASWYFSRKEIEENSLSRRDGIDLKKESYLRKSYCTFLQDLGMRLKVPQVTIATAIVFCHRFFLRQSHAKNDRRTIATVCMFLAGKVEETPRPLKDVILISYEIIHKKDAAAVQRIKQKEVYEQQKELILLGERVVLVTLGFDLNVHHPYKPLVEAIKKFKVAQNALAQVAWNFVNDGLRTSLCLQFKPHHIAAGAIFLAAKFLKVKLPSDGEKVWWQEFDVTPRQLEEVSNQMLELYEQNRVAPPPSQGNDTEGSSASVVNQRASGKAPGSSEEPPTHENHLAPRQSSTPGHQGYDHPHPEKQNSSQRVPQNDARDGTANSNEGPNMSSTMDAMKKIDKDKVKAALEKRRKSKGDVAKKVDIMDDDDLIERELEHGVELAAEDEKIKHERRQSWPHSAHREDHQGVARLTENTEEGELSIDSQEYRSPELDNRKRKDMHEHRNYDRGERDLKRLRS.

Disordered stretches follow at residues 275 to 391 and 414 to 490; these read RVAP…GDVA and AAED…RLRS. Polar residues-rich tracts occupy residues 282-298 and 352-365; these read QGND…NQRA and TANS…SSTM. 2 stretches are compositionally biased toward basic and acidic residues: residues 367–391 and 457–490; these read AMKK…GDVA and QEYR…RLRS.

It belongs to the cyclin family. Cyclin T subfamily.

The protein is Cyclin-T1-3 (CYCT1-3) of Oryza sativa subsp. japonica (Rice).